A 363-amino-acid polypeptide reads, in one-letter code: Fructose-bisphosphate aldolase, muscle type (363 aa).

Positions 56 and 147 each coordinate substrate. Lys-230 serves as the catalytic Schiff-base intermediate with dihydroxyacetone-P.

This sequence belongs to the class I fructose-bisphosphate aldolase family. In terms of assembly, homotetramer. Expressed mainly in the skeletal muscle, heart muscle, brain, and some other tissues, but probably not in liver.

The catalysed reaction is beta-D-fructose 1,6-bisphosphate = D-glyceraldehyde 3-phosphate + dihydroxyacetone phosphate. It functions in the pathway carbohydrate degradation; glycolysis; D-glyceraldehyde 3-phosphate and glycerone phosphate from D-glucose: step 4/4. This chain is Fructose-bisphosphate aldolase, muscle type, found in Lethenteron camtschaticum (Japanese lamprey).